The following is a 436-amino-acid chain: DNA-dependent metalloprotease SPRTN (436 aa).

Residues 19 to 186 (IRALFLEFND…RTCGGEFVKI (168 aa)) enclose the SprT-like domain. His-85 is a binding site for Zn(2+). Residue Glu-86 is part of the active site. Residues His-89 and His-104 each coordinate Zn(2+). A disordered region spans residues 184-219 (VKIKEPENYSQKRKRNNDPTKSELGNSSHVKINKGK). An SHP-box motif is present at residues 231 to 239 (FSGTGYKLF). A PIP-box motif is present at residues 271–277 (QTDSTFL). The interval 300–321 (GSPIKLPSSSNNKSHQDSSKQK) is disordered. Residues 408-435 (KVCCPVCGTEIFESKINDHLDTCLQNYN) form a UBZ4-type zinc finger. Residues Cys-411, Cys-414, His-426, and Cys-430 each coordinate Zn(2+).

The protein belongs to the Spartan family. In terms of assembly, homodimer. Zn(2+) is required as a cofactor. Autocatalytically cleaved in response to double-stranded DNA-binding: autocatalytic cleavage takes place in trans and leads to inactivation.

It is found in the nucleus. The protein resides in the chromosome. Its activity is regulated as follows. DNA-binding activates the protease activity: single-stranded DNA-binding specifically activates ability to cleave covalent DNA-protein cross-links (DPCs). In contrast, double-stranded DNA-binding specifically activates autocatalytic cleavage, and subsequent inactivation. DNA-dependent metalloendopeptidase that mediates the proteolytic cleavage of covalent DNA-protein cross-links (DPCs) during DNA synthesis, thereby playing a key role in maintaining genomic integrity. DPCs are highly toxic DNA lesions that interfere with essential chromatin transactions, such as replication and transcription, and which are induced by reactive agents, such as UV light or formaldehyde. Associates with the DNA replication machinery and specifically removes DPCs during DNA synthesis. Catalyzes proteolytic cleavage of the hmces DNA-protein cross-link following unfolding by the brip1/fancj helicase. Acts as a pleiotropic protease for DNA-binding proteins cross-linked with DNA, such as top1, top2a, histones H3 and H4. Mediates degradation of DPCs that are not ubiquitinated, while it is not able to degrade ubiquitinated DPCs. SPRTN activation requires polymerase collision with DPCs followed by helicase bypass of DPCs. May also act as a 'reader' of ubiquitinated pcna: facilitates chromatin association of rad18 and is required for efficient pcna monoubiquitination, promoting a feed-forward loop to enhance pcna ubiquitination and translesion DNA synthesis. Acts as a regulator of translesion DNA synthesis by recruiting vcp/p97 to sites of DNA damage. The chain is DNA-dependent metalloprotease SPRTN from Xenopus tropicalis (Western clawed frog).